A 207-amino-acid chain; its full sequence is MAKTYDYLFKLLLIGDSGVGKTCALFRFSEDAFNATFISTIGIDFKIRTIELDGKRIKLQIWDTAGQERFRTITTAYYRGAMGIMLVYDITNEKSFENIRNWVRNIEEHASPDVEKMILGNKCDANDKRQVSREQGEKLAASFGIKFMETSAKANINIENAFFTLARDIKAKMDKKLEGNSPQGSNQGVKITPDQQKKSSFFRCVLL.

Residues S17, G18, V19, G20, K21, T22, C23, S39, and T40 each contribute to the GTP site. Mg(2+) is bound at residue T22. 2 consecutive short sequence motifs (switch) follow at residues 31–45 and 63–80; these read DAFN…GIDF and DTAG…YYRG. T40 and D63 together coordinate Mg(2+). GTP-binding residues include G66, N121, K122, D124, A152, and K153. C204 carries the cysteine methyl ester modification. A lipid anchor (S-geranylgeranyl cysteine) is attached at C204. Residues 205–207 constitute a propeptide, removed in mature form; it reads VLL.

Belongs to the small GTPase superfamily. Rab family. Mg(2+) serves as cofactor.

It is found in the cell membrane. The protein resides in the golgi apparatus. It localises to the endosome membrane. The protein localises to the recycling endosome membrane. Its subcellular location is the cell projection. It is found in the cilium. The protein resides in the cytoplasmic vesicle. It localises to the phagosome membrane. The protein localises to the cytoplasm. Its subcellular location is the cytoskeleton. It is found in the microtubule organizing center. The protein resides in the centrosome. It localises to the centriole. The protein localises to the cilium basal body. Its subcellular location is the midbody. The catalysed reaction is GTP + H2O = GDP + phosphate + H(+). Regulated by guanine nucleotide exchange factors (GEFs) which promote the exchange of bound GDP for free GTP, GTPase activating proteins (GAPs) which increase the GTP hydrolysis activity, and GDP dissociation inhibitors (GDIs) which inhibit the dissociation of the nucleotide from the GTPase. Activated in response to insulin. Functionally, the small GTPases Rab are key regulators of intracellular membrane trafficking, from the formation of transport vesicles to their fusion with membranes. Rabs cycle between an inactive GDP-bound form and an active GTP-bound form that is able to recruit to membranes different sets of downstream effectors directly responsible for vesicle formation, movement, tethering and fusion. RAB8A is involved in polarized vesicular trafficking and neurotransmitter release. Together with RAB11A, RAB3IP, the exocyst complex, PARD3, PRKCI, ANXA2, CDC42 and DNMBP promotes transcytosis of PODXL to the apical membrane initiation sites (AMIS), apical surface formation and lumenogenesis. Regulates the compacted morphology of the Golgi. Together with MYO5B and RAB11A participates in epithelial cell polarization. Also involved in membrane trafficking to the cilium and ciliogenesis. Together with MICALL2, may also regulate adherens junction assembly. May play a role in insulin-induced transport to the plasma membrane of the glucose transporter GLUT4 and therefore play a role in glucose homeostasis. Involved in autophagy. Participates in the export of a subset of neosynthesized proteins through a Rab8-Rab10-Rab11-dependent endososomal export route. Targeted to and stabilized on stressed lysosomes through LRRK2 phosphorylation. Suppresses stress-induced lysosomal enlargement through EHBP1 and EHNP1L1 effector proteins. This is Ras-related protein Rab-8A (RAB8A) from Gallus gallus (Chicken).